Consider the following 916-residue polypeptide: Protein translocase subunit SecA (916 aa).

ATP is bound by residues Gln87, 105–109 (GEGKT), and Asp507. The Zn(2+) site is built by Cys900, Cys902, Cys911, and His912.

It belongs to the SecA family. Monomer and homodimer. Part of the essential Sec protein translocation apparatus which comprises SecA, SecYEG and auxiliary proteins SecDF-YajC and YidC. It depends on Zn(2+) as a cofactor.

Its subcellular location is the cell inner membrane. The protein resides in the cytoplasm. The enzyme catalyses ATP + H2O + cellular proteinSide 1 = ADP + phosphate + cellular proteinSide 2.. In terms of biological role, part of the Sec protein translocase complex. Interacts with the SecYEG preprotein conducting channel. Has a central role in coupling the hydrolysis of ATP to the transfer of proteins into and across the cell membrane, serving both as a receptor for the preprotein-SecB complex and as an ATP-driven molecular motor driving the stepwise translocation of polypeptide chains across the membrane. In Neisseria meningitidis serogroup C (strain 053442), this protein is Protein translocase subunit SecA.